The primary structure comprises 1077 residues: Zinc finger protein 518B (1077 aa).

A compositionally biased stretch (polar residues) spans 9-30; sequence YTTQVNGGPSSLTMSPKQPNRA. Residues 9-35 are disordered; that stretch reads YTTQVNGGPSSLTMSPKQPNRATRTER. 2 C2H2-type zinc fingers span residues 160 to 182 and 188 to 211; these read FICS…LVKH and YRCE…RRVH. Positions 372–397 are disordered; that stretch reads TSRGDGGTSECLSTEKGSGGQKKMLS. Lys-479 participates in a covalent cross-link: Glycyl lysine isopeptide (Lys-Gly) (interchain with G-Cter in SUMO2). Disordered stretches follow at residues 561–585, 599–622, 675–739, and 825–852; these read LVSS…GQVS, GEDK…ETAG, KPSS…GSRQ, and QPLT…RKED. Residues 564–574 show a composition bias toward basic and acidic residues; the sequence is SDRKLEDKQME. Polar residues-rich tracts occupy residues 605–621 and 675–688; these read SQQP…SETA and KPSS…QRRS. Residues Lys-847 and Lys-861 each participate in a glycyl lysine isopeptide (Lys-Gly) (interchain with G-Cter in SUMO2) cross-link. The tract at residues 895-914 is disordered; the sequence is QVNSTKKKNKMQANPGRYFK. A C2H2-type 3 zinc finger spans residues 1039 to 1061; that stretch reads FKCWFCGRLYEDQEEWMSHGQRH.

The protein belongs to the krueppel C2H2-type zinc-finger protein family.

It localises to the nucleus. Through its association with the EHMT1-EHMT2/G9A and PRC2/EED-EZH2 histone methyltransferase complexes may function in gene silencing, regulating repressive post-translational methylation of histone tails at promoters of target genes. The polypeptide is Zinc finger protein 518B (Znf518b) (Mus musculus (Mouse)).